Reading from the N-terminus, the 960-residue chain is Collagenase ColA (960 aa).

An N-terminal signal peptide occupies residues 1-30 (MNKNLRFTQMMIGISTMALSFGSIQTQVSA). Positions 31 to 92 (EETAPYNILQ…KRDEIQLKQS (62 aa)) are excised as a propeptide. The segment at 93–365 (YTLAELNKMP…AVEQMKTNYG (273 aa)) is activator domain. An S1 metalloprotease domain region spans residues 93–764 (YTLAELNKMP…VFHGVATEEK (672 aa)). Positions 375–644 (DLQKIREEGK…MQQLIDNQDK (270 aa)) are catalytic subdomain. Histidine 500 is a Zn(2+) binding site. Glutamate 501 is an active-site residue. Residues histidine 504 and glutamate 532 each contribute to the Zn(2+) site. The interval 652–764 (NDYLIQHAPK…VFHGVATEEK (113 aa)) is helper subdomain. The PKD domain maps to 768 to 849 (TTIVNMNGPY…ESKEQTKVTV (82 aa)). Residues 836-845 (SRGKESKEQT) are compositionally biased toward basic and acidic residues. The tract at residues 836–859 (SRGKESKEQTKVTVKQDPQTSESY) is disordered. Over residues 846–857 (KVTVKQDPQTSE) the composition is skewed to polar residues. The interval 852-960 (DPQTSESYEE…KNGEYSLLVK (109 aa)) is collagen-binding domain.

Belongs to the peptidase M9B family. Collagenase subfamily. Ca(2+) is required as a cofactor. It depends on Zn(2+) as a cofactor.

The protein resides in the secreted. It catalyses the reaction Digestion of native collagen in the triple helical region at Xaa-|-Gly bonds. With synthetic peptides, a preference is shown for Gly at P3 and P1', Pro and Ala at P2 and P2', and hydroxyproline, Ala or Arg at P3'.. Acts as a true collagenase, which is highly active and efficiently targets native tropocollagen. In vitro, can also cleave gelatin and the synthetic peptide FALGPA (furylacryloyl-Leu-Gly-Pro-Ala). May contribute to bacterial virulence in endophthalmitis or opportunistic infections via collagen degradation in the host extracellular matrix (ECM). The chain is Collagenase ColA from Bacillus cereus (strain ATCC 14579 / DSM 31 / CCUG 7414 / JCM 2152 / NBRC 15305 / NCIMB 9373 / NCTC 2599 / NRRL B-3711).